The sequence spans 275 residues: 4-diphosphocytidyl-2-C-methyl-D-erythritol kinase (275 aa).

Lys14 is a catalytic residue. 94-104 (PMEAGLGGGSA) lines the ATP pocket. Asp134 is an active-site residue.

This sequence belongs to the GHMP kinase family. IspE subfamily.

It catalyses the reaction 4-CDP-2-C-methyl-D-erythritol + ATP = 4-CDP-2-C-methyl-D-erythritol 2-phosphate + ADP + H(+). The protein operates within isoprenoid biosynthesis; isopentenyl diphosphate biosynthesis via DXP pathway; isopentenyl diphosphate from 1-deoxy-D-xylulose 5-phosphate: step 3/6. Its function is as follows. Catalyzes the phosphorylation of the position 2 hydroxy group of 4-diphosphocytidyl-2C-methyl-D-erythritol. This chain is 4-diphosphocytidyl-2-C-methyl-D-erythritol kinase, found in Thermosipho africanus (strain TCF52B).